Reading from the N-terminus, the 102-residue chain is Small ribosomal subunit protein uS10 (102 aa).

The protein belongs to the universal ribosomal protein uS10 family. In terms of assembly, part of the 30S ribosomal subunit.

Functionally, involved in the binding of tRNA to the ribosomes. This Sulfurihydrogenibium sp. (strain YO3AOP1) protein is Small ribosomal subunit protein uS10.